A 536-amino-acid chain; its full sequence is Proto-oncogene tyrosine-protein kinase Yrk (536 aa).

G2 is lipidated: N-myristoyl glycine. 2 S-palmitoyl cysteine lipidation sites follow: C3 and C6. A disordered region spans residues 10 to 36 (ISGKGQGGSGTGTPAHPPSQYDPDPTQ). Positions 81-142 (GGVTLFIALY…PSNYVAPVDS (62 aa)) constitute an SH3 domain. Residues 148–245 (WYFGKIGRKD…GLCCRLAVPC (98 aa)) enclose the SH2 domain. The region spanning 270 to 523 (LQLLQKLGNG…YLQSFLEDYF (254 aa)) is the Protein kinase domain. ATP-binding positions include 276–284 (LGNGQFGEV) and K298. Residue D389 is the Proton acceptor of the active site. Y419 is subject to Phosphotyrosine; by autocatalysis. At Y530 the chain carries Phosphotyrosine.

It belongs to the protein kinase superfamily. Tyr protein kinase family. SRC subfamily. Phosphorylated. In terms of tissue distribution, there are elevated levels of this protein in neural and hematopoietic tissues.

The catalysed reaction is L-tyrosyl-[protein] + ATP = O-phospho-L-tyrosyl-[protein] + ADP + H(+). May participate in signaling pathways. The polypeptide is Proto-oncogene tyrosine-protein kinase Yrk (YRK) (Gallus gallus (Chicken)).